Here is a 122-residue protein sequence, read N- to C-terminus: Large ribosomal subunit protein uL18 (122 aa).

The protein belongs to the universal ribosomal protein uL18 family. In terms of assembly, part of the 50S ribosomal subunit; part of the 5S rRNA/L5/L18/L25 subcomplex. Contacts the 5S and 23S rRNAs.

Functionally, this is one of the proteins that bind and probably mediate the attachment of the 5S RNA into the large ribosomal subunit, where it forms part of the central protuberance. This Synechococcus sp. (strain JA-2-3B'a(2-13)) (Cyanobacteria bacterium Yellowstone B-Prime) protein is Large ribosomal subunit protein uL18.